Reading from the N-terminus, the 217-residue chain is MGAQGFFLAVEGIDGSGKSGIVRSLAAHLGAEGRDVLVTREPGGTPEGEAIRGLVLAGADEAWDPMAELLLMTAARVQHVRRVIAPALAQGRVVISDRYAGSTLAYQGTGRGLSEAFIRTLHAEATGDLWPDLTLVLDLEAGIGLARSRRRLTGETLDEGRFESLDLAFHERIRAAFLAQAARDPGRHAVIDASGTPEEVQARACAALAPFLAQAPV.

Residue 12-19 (GIDGSGKS) participates in ATP binding.

This sequence belongs to the thymidylate kinase family.

The enzyme catalyses dTMP + ATP = dTDP + ADP. Its function is as follows. Phosphorylation of dTMP to form dTDP in both de novo and salvage pathways of dTTP synthesis. The sequence is that of Thymidylate kinase from Cereibacter sphaeroides (strain ATCC 17023 / DSM 158 / JCM 6121 / CCUG 31486 / LMG 2827 / NBRC 12203 / NCIMB 8253 / ATH 2.4.1.) (Rhodobacter sphaeroides).